Reading from the N-terminus, the 316-residue chain is Pantothenate kinase (316 aa).

95–102 (GSVAVGKS) lines the ATP pocket.

Belongs to the prokaryotic pantothenate kinase family.

The protein localises to the cytoplasm. It carries out the reaction (R)-pantothenate + ATP = (R)-4'-phosphopantothenate + ADP + H(+). It functions in the pathway cofactor biosynthesis; coenzyme A biosynthesis; CoA from (R)-pantothenate: step 1/5. The sequence is that of Pantothenate kinase from Klebsiella pneumoniae subsp. pneumoniae (strain ATCC 700721 / MGH 78578).